We begin with the raw amino-acid sequence, 378 residues long: Anhydro-N-acetylmuramic acid kinase (378 aa).

9-16 contacts ATP; the sequence is GTSVDGID.

It belongs to the anhydro-N-acetylmuramic acid kinase family.

The enzyme catalyses 1,6-anhydro-N-acetyl-beta-muramate + ATP + H2O = N-acetyl-D-muramate 6-phosphate + ADP + H(+). It functions in the pathway amino-sugar metabolism; 1,6-anhydro-N-acetylmuramate degradation. Its pathway is cell wall biogenesis; peptidoglycan recycling. Functionally, catalyzes the specific phosphorylation of 1,6-anhydro-N-acetylmuramic acid (anhMurNAc) with the simultaneous cleavage of the 1,6-anhydro ring, generating MurNAc-6-P. Is required for the utilization of anhMurNAc either imported from the medium or derived from its own cell wall murein, and thus plays a role in cell wall recycling. The sequence is that of Anhydro-N-acetylmuramic acid kinase from Microcystis aeruginosa (strain NIES-843 / IAM M-2473).